Consider the following 142-residue polypeptide: HTH-type transcriptional regulator MntR (142 aa).

In terms of domain architecture, HTH dtxR-type spans 1-63; sequence MPTPSMEDYI…YEKYRGLILT (63 aa). Residues D8, E11, H77, E99, E102, and H103 each coordinate Mn(2+).

Belongs to the DtxR/MntR family. As to quaternary structure, homodimer.

The protein localises to the cytoplasm. DNA binding is strongly activated by Mn(2+). Its function is as follows. Central regulator of manganese homeostasis. The protein is HTH-type transcriptional regulator MntR of Listeria monocytogenes serotype 4b (strain CLIP80459).